The primary structure comprises 343 residues: Zinc finger CCCH domain-containing protein 39 (343 aa).

The stretch at 114–147 forms a coiled coil; it reads LSHLADAADEAAALRQENAELRVANNDLACRIAK. C3H1-type zinc fingers lie at residues 268-296 and 306-334; these read MFKT…HGVA and RYKT…HSIT.

The polypeptide is Zinc finger CCCH domain-containing protein 39 (Oryza sativa subsp. japonica (Rice)).